The following is a 66-amino-acid chain: MEVDVPGVDGRDGLRERRGLSEGGRQNLDVRPQSGANGLPKHSYWLDLWLFIFFDVVVFLFVYFLP.

Residue M1 is modified to N-acetylmethionine. The segment at 1-38 (MEVDVPGVDGRDGLRERRGLSEGGRQNLDVRPQSGANG) is disordered. The span at 9–20 (DGRDGLRERRGL) shows a compositional bias: basic and acidic residues. The helical transmembrane segment at 45-65 (WLDLWLFIFFDVVVFLFVYFL) threads the bilayer.

In terms of assembly, homooligomer. Can also form heterooligomers with other sarcoplasmic/endoplasmic reticulum calcium ATPase (SERCA) regulators ERLN, PLN, SLN and STRIT1/DWORF. Monomer. Interacts as a monomer with ATP2A2/SERCA2; the interaction results in inhibition of ATP2A2 Ca(2+) affinity.

The protein localises to the endoplasmic reticulum membrane. Inhibits the activity of the calcium ATPases ATP2A2/SERCA2 and ATP2A3/SERCA3 by decreasing their apparent affinity for Ca(2+). This Pongo abelii (Sumatran orangutan) protein is Sarcoplasmic/endoplasmic reticulum calcium ATPase regulator ARLN (ARLN).